The sequence spans 198 residues: MICOS complex subunit MIC26 (198 aa).

Positions 1-25 (MFKVIHRYVGPASLSLLTFKVYASS) are cleaved as a signal peptide. A helical transmembrane segment spans residues 108 to 128 (PGFFPRLGVIGFAGVVGLVLA). A glycan (O-linked (Xyl...) (chondroitin sulfate) serine) is linked at Ser-162.

Belongs to the apolipoprotein O/MICOS complex subunit Mic27 family. As to quaternary structure, component of the mitochondrial contact site and cristae organizing system (MICOS) complex, composed of at least MICOS10/MIC10, CHCHD3/MIC19, CHCHD6/MIC25, APOOL/MIC27, IMMT/MIC60, APOO/MIC23/MIC26 and MICOS13/MIC13. This complex was also known under the names MINOS or MitOS complex. The MICOS complex associates with mitochondrial outer membrane proteins SAMM50, MTX1 and MTX2 (together described as components of the mitochondrial outer membrane sorting assembly machinery (SAM) complex) and DNAJC11, mitochondrial inner membrane protein TMEM11 and with HSPA9. The MICOS and SAM complexes together with DNAJC11 are part of a large protein complex spanning both membranes termed the mitochondrial intermembrane space bridging (MIB) complex. Interacts with IMMT/MIC60. Interacts with MICOS10/MIC10 and APOOL/MIC27. Post-translationally, O-glycosylation; glycosaminoglycan of chondroitin-sulfate type.

Its subcellular location is the mitochondrion inner membrane. The protein resides in the secreted. The protein localises to the mitochondrion. It localises to the endoplasmic reticulum membrane. It is found in the golgi apparatus membrane. Its function is as follows. Component of the MICOS complex, a large protein complex of the mitochondrial inner membrane that plays crucial roles in the maintenance of crista junctions, inner membrane architecture, and formation of contact sites to the outer membrane. Plays a crucial role in crista junction formation and mitochondrial function. Can induce cardiac lipotoxicity by enhancing mitochondrial respiration and fatty acid metabolism in cardiac myoblasts. Promotes cholesterol efflux from macrophage cells. Detected in HDL, LDL and VLDL. Secreted by a microsomal triglyceride transfer protein (MTTP)-dependent mechanism, probably as a VLDL-associated protein that is subsequently transferred to HDL. This Bos taurus (Bovine) protein is MICOS complex subunit MIC26 (APOO).